The primary structure comprises 289 residues: LBH domain-containing protein 1 (289 aa).

2 disordered regions span residues 1–36 and 205–289; these read MALV…PLWD and EGAE…ASQD. In terms of domain architecture, LBH spans 1-128; that stretch reads MALVPGRSKE…AEAFFQDQSE (128 aa). Polar residues predominate over residues 15–25; sequence TRNSPGSSQHP.

In terms of tissue distribution, expressed in bladder cancer tissues (at protein level).

The chain is LBH domain-containing protein 1 from Homo sapiens (Human).